Reading from the N-terminus, the 226-residue chain is Eukaryotic translation initiation factor 3 subunit K (226 aa).

The 159-residue stretch at 44–202 (YSLEVNLCLL…IVLPQNEFNH (159 aa)) folds into the PCI domain.

The protein belongs to the eIF-3 subunit K family. Component of the eukaryotic translation initiation factor 3 (eIF-3) complex.

The protein localises to the cytoplasm. Component of the eukaryotic translation initiation factor 3 (eIF-3) complex, which is involved in protein synthesis of a specialized repertoire of mRNAs and, together with other initiation factors, stimulates binding of mRNA and methionyl-tRNAi to the 40S ribosome. The eIF-3 complex specifically targets and initiates translation of a subset of mRNAs involved in cell proliferation. The polypeptide is Eukaryotic translation initiation factor 3 subunit K (TIF3K1) (Arabidopsis thaliana (Mouse-ear cress)).